The sequence spans 268 residues: Glucosamine-6-phosphate deaminase (268 aa).

Asp-72 functions as the Proton acceptor; for enolization step in the catalytic mechanism. Asp-141 acts as the For ring-opening step in catalysis. His-143 functions as the Proton acceptor; for ring-opening step in the catalytic mechanism. Glu-148 serves as the catalytic For ring-opening step.

The protein belongs to the glucosamine/galactosamine-6-phosphate isomerase family. NagB subfamily. As to quaternary structure, homohexamer.

It catalyses the reaction alpha-D-glucosamine 6-phosphate + H2O = beta-D-fructose 6-phosphate + NH4(+). The protein operates within amino-sugar metabolism; N-acetylneuraminate degradation; D-fructose 6-phosphate from N-acetylneuraminate: step 5/5. With respect to regulation, allosterically activated by N-acetylglucosamine 6-phosphate (GlcNAc6P). Functionally, catalyzes the reversible isomerization-deamination of glucosamine 6-phosphate (GlcN6P) to form fructose 6-phosphate (Fru6P) and ammonium ion. This Histophilus somni (strain 129Pt) (Haemophilus somnus) protein is Glucosamine-6-phosphate deaminase.